A 323-amino-acid polypeptide reads, in one-letter code: Galectin-4 (323 aa).

2 consecutive Galectin domains span residues 19 to 150 and 194 to 323; these read YYKP…INFI and YKTR…YVQI. 256 to 262 provides a ligand contact to a beta-D-galactoside; sequence WGAEERK.

As to quaternary structure, monomer.

Functionally, galectin that binds lactose and a related range of sugars. May be involved in the assembly of adherens junctions. The sequence is that of Galectin-4 (LGALS4) from Sus scrofa (Pig).